The sequence spans 294 residues: Aspartate carbamoyltransferase catalytic subunit (294 aa).

2 residues coordinate carbamoyl phosphate: R49 and T50. Position 77 (K77) interacts with L-aspartate. The carbamoyl phosphate site is built by R99, H127, and Q130. Residues R161 and R211 each contribute to the L-aspartate site. The carbamoyl phosphate site is built by G250 and P251.

It belongs to the aspartate/ornithine carbamoyltransferase superfamily. ATCase family. In terms of assembly, heterododecamer (2C3:3R2) of six catalytic PyrB chains organized as two trimers (C3), and six regulatory PyrI chains organized as three dimers (R2).

It catalyses the reaction carbamoyl phosphate + L-aspartate = N-carbamoyl-L-aspartate + phosphate + H(+). It functions in the pathway pyrimidine metabolism; UMP biosynthesis via de novo pathway; (S)-dihydroorotate from bicarbonate: step 2/3. In terms of biological role, catalyzes the condensation of carbamoyl phosphate and aspartate to form carbamoyl aspartate and inorganic phosphate, the committed step in the de novo pyrimidine nucleotide biosynthesis pathway. The protein is Aspartate carbamoyltransferase catalytic subunit of Sulfurovum sp. (strain NBC37-1).